The following is a 212-amino-acid chain: MTDKIVTSEEMRHYDSYTINTIGIPSLVLMERAALAVRDEILHAFPIALKDVVVVAGSGNNGGDGIAIARLLHLAGVHVTILNIGNPKHASAEHQTQEKIAQYYQIPETSDLAVLNKATLIVDAMFGIGIDRAVKGAYADAINAINNTDVVVVAVDMPSGINTDTGEVMGTAVRATTTVTFAYNKVGLTKNAGKDYAGNIVVANDMGTYAVD.

Residues 11–212 (MRHYDSYTIN…ANDMGTYAVD (202 aa)) enclose the YjeF N-terminal domain. 60–64 (NNGGD) contributes to the (6S)-NADPHX binding site. K(+) is bound by residues Asn-61 and Asp-123. (6S)-NADPHX contacts are provided by residues 127-133 (GIGIDRA), Tyr-138, and Asp-156. Position 159 (Ser-159) interacts with K(+).

This sequence belongs to the NnrE/AIBP family. K(+) serves as cofactor.

The catalysed reaction is (6R)-NADHX = (6S)-NADHX. The enzyme catalyses (6R)-NADPHX = (6S)-NADPHX. Catalyzes the epimerization of the S- and R-forms of NAD(P)HX, a damaged form of NAD(P)H that is a result of enzymatic or heat-dependent hydration. This is a prerequisite for the S-specific NAD(P)H-hydrate dehydratase to allow the repair of both epimers of NAD(P)HX. The polypeptide is NAD(P)H-hydrate epimerase (Limosilactobacillus reuteri (strain ATCC 55730 / SD2112) (Lactobacillus reuteri)).